A 412-amino-acid polypeptide reads, in one-letter code: Palmitoyltransferase ZDHHC6 (412 aa).

At 1–24 (MNILSAIIVFENLHEVKRLFHWGP) the chain is on the cytoplasmic side. Residues 25 to 45 (IIALTVIGVCSSMAILDSIIW) form a helical membrane-spanning segment. Over 46-57 (YWPLDTTGGSIN) the chain is Lumenal. A helical membrane pass occupies residues 58-78 (FIMLINWTVLILYNYFNAMFV). Topologically, residues 79 to 143 (GPGYIPLEWK…NCCGHLNHAY (65 aa)) are cytoplasmic. One can recognise a DHHC domain in the interval 99-149 (QFCRLCQGYKAPRSHHCRKCNRCVMKMDHHCPWINNCCGHLNHAYFTSFLL). Cys129 functions as the S-palmitoyl cysteine intermediate in the catalytic mechanism. A helical transmembrane segment spans residues 144–164 (FTSFLLLAPLGCIHAALIFIM). Residues 165-205 (TMYTQLYDRISFGWSSVKIDMSAARHIHHPIMPFSIAAFAA) lie on the Lumenal side of the membrane. Residues 206 to 226 (TLFALGLALGTTIAVGMLFFI) traverse the membrane as a helical segment. At 227-412 (QMKVILRNRT…NSTSEEKKEQ (186 aa)) the chain is on the cytoplasmic side. The 86-residue stretch at 313-398 (QRSVEYRVVE…PRRCVEKCLY (86 aa)) folds into the SH3 domain. 3 S-palmitoyl cysteine lipidation sites follow: Cys328, Cys329, and Cys343. The Di-lysine motif motif lies at 409–412 (KKEQ).

It belongs to the DHHC palmitoyltransferase family.

The protein localises to the endoplasmic reticulum membrane. The catalysed reaction is L-cysteinyl-[protein] + hexadecanoyl-CoA = S-hexadecanoyl-L-cysteinyl-[protein] + CoA. The enzyme catalyses L-cysteinyl-[protein] + octadecanoyl-CoA = S-octadecanoyl-L-cysteinyl-[protein] + CoA. Its function is as follows. Endoplasmic reticulum palmitoyl acyltransferase that probably catalyzes the addition of palmitate onto various protein substrates and is involved in a variety of cellular processes. Could also function as a stearoyltransferase. This Danio rerio (Zebrafish) protein is Palmitoyltransferase ZDHHC6.